The sequence spans 271 residues: Elongation factor Ts (271 aa).

The tract at residues 76–79 is involved in Mg(2+) ion dislocation from EF-Tu; it reads TDFV.

The protein belongs to the EF-Ts family.

It is found in the cytoplasm. Functionally, associates with the EF-Tu.GDP complex and induces the exchange of GDP to GTP. It remains bound to the aminoacyl-tRNA.EF-Tu.GTP complex up to the GTP hydrolysis stage on the ribosome. The protein is Elongation factor Ts of Mycobacterium tuberculosis (strain ATCC 25177 / H37Ra).